Reading from the N-terminus, the 223-residue chain is UPF0502 protein Avin_04790 (223 aa).

The protein belongs to the UPF0502 family.

This Azotobacter vinelandii (strain DJ / ATCC BAA-1303) protein is UPF0502 protein Avin_04790.